The sequence spans 157 residues: uncharacterized protein (157 aa).

One can recognise an N-acetyltransferase domain in the interval 9–154 (LLINYKTLDE…ETNLNAVTNE (146 aa)).

This is an uncharacterized protein from Bacillus cereus (strain G9842).